The primary structure comprises 1418 residues: ABC transporter G family member 38 (1418 aa).

Positions 1–27 (MAHYRVSSEVENIMNRDRSHRKNEEED) are disordered. Residues 147-419 (TKIRVLPDRK…FEFMGFKCPE (273 aa)) form the ABC transporter 1 domain. 179–186 (GPPGSGKS) is a binding site for ATP. The ABC transmembrane type-2 1 domain occupies 497-710 (ELLKACLERE…IQTAVSVNEF (214 aa)). 6 helical membrane passes run 516–536 (TFVL…VVFW), 548–568 (GIIY…SGFF), 600–620 (IITF…TYFT), 634–654 (YLVL…IAAV), 659–679 (VVSN…SGYV), and 729–749 (FFVE…STIL). The 253-residue stretch at 821 to 1073 (MTFENITYSV…QLIEYFEGIR (253 aa)) folds into the ABC transporter 2 domain. 866-873 (GVSGAGKT) contacts ATP. The ABC transmembrane type-2 2 domain maps to 1146-1360 (SQFQACLWKQ…GLYGLTIAQY (215 aa)). Helical transmembrane passes span 1167–1187 (AVRF…FWSL), 1197–1217 (IFNS…QSAA), 1249–1269 (VIIE…IVYG), 1284–1304 (IFFT…VISV), 1310–1330 (IASI…GFTI), 1341–1361 (WFTY…AQYG), and 1387–1407 (FLWV…FIYA).

It belongs to the ABC transporter superfamily. ABCG family. PDR (TC 3.A.1.205) subfamily. Expressed in roots and siliques at low levels.

Its subcellular location is the membrane. May be a general defense protein. The chain is ABC transporter G family member 38 (ABCG38) from Arabidopsis thaliana (Mouse-ear cress).